The following is a 526-amino-acid chain: Tyrosine-protein kinase transforming protein Src (526 aa).

Residues 1–52 are disordered; that stretch reads MGSSKSKPKDPSQRRHSLEPPDSTHHGGFPASQTPDETAAPDAHRNPSRSFG. Glycine 2 is lipidated: N-myristoyl glycine; by host. A compositionally biased stretch (basic and acidic residues) spans 7–25; the sequence is KPKDPSQRRHSLEPPDSTH. 2 SH3 domains span residues 71–139 and 81–142; these read TSPQ…YVAP and GGVT…PSDS. The SH2 domain maps to 148–245; that stretch reads WYFGKITRRE…GLCHRLANVC (98 aa). In terms of domain architecture, Protein kinase spans 267 to 517; that stretch reads LRLEAKLGQG…TFKYLQAQLL (251 aa). Residues 273–281 and lysine 295 contribute to the ATP site; that span reads LGQGCFGEV. Aspartate 386 (proton acceptor) is an active-site residue. A Phosphotyrosine; by autocatalysis modification is found at tyrosine 416.

This sequence belongs to the protein kinase superfamily. Tyr protein kinase family. SRC subfamily. In terms of assembly, homodimer. Post-translationally, the phosphorylated form is termed pp60v-src.

The enzyme catalyses L-tyrosyl-[protein] + ATP = O-phospho-L-tyrosyl-[protein] + ADP + H(+). Its function is as follows. This phosphoprotein, required for both the initiation and the maintenance of neoplastic transformation, is a protein kinase that catalyzes the phosphorylation of tyrosine residues in vitro. This is Tyrosine-protein kinase transforming protein Src (V-SRC) from Gallus gallus (Chicken).